Here is a 330-residue protein sequence, read N- to C-terminus: DNA-directed RNA polymerase subunit alpha (330 aa).

The segment at 1–231 (MALFNFQKPD…IHHFMLFSDE (231 aa)) is alpha N-terminal domain (alpha-NTD). Residues 253–330 (MRQLLKTKLV…DLAKYKLDKE (78 aa)) form an alpha C-terminal domain (alpha-CTD) region.

It belongs to the RNA polymerase alpha chain family. As to quaternary structure, homodimer. The RNAP catalytic core consists of 2 alpha, 1 beta, 1 beta' and 1 omega subunit. When a sigma factor is associated with the core the holoenzyme is formed, which can initiate transcription.

The catalysed reaction is RNA(n) + a ribonucleoside 5'-triphosphate = RNA(n+1) + diphosphate. Its function is as follows. DNA-dependent RNA polymerase catalyzes the transcription of DNA into RNA using the four ribonucleoside triphosphates as substrates. The protein is DNA-directed RNA polymerase subunit alpha of Flavobacterium psychrophilum (strain ATCC 49511 / DSM 21280 / CIP 103535 / JIP02/86).